Consider the following 156-residue polypeptide: UPF0587 protein (156 aa).

The Zn(2+) site is built by cysteine 32, cysteine 35, cysteine 64, and cysteine 67.

It belongs to the UPF0587 family.

The chain is UPF0587 protein from Dictyostelium discoideum (Social amoeba).